The following is a 246-amino-acid chain: Chaperone protein SefB (246 aa).

Residues 1 to 24 (MYILNKFIRRTVIFFFFCYLPIAS) form the signal peptide. Cys124 and Cys155 are disulfide-bonded.

Belongs to the periplasmic pilus chaperone family.

The protein localises to the periplasm. Required for the biogenesis of the SefA (SEF14) fimbria. This chain is Chaperone protein SefB (sefB), found in Salmonella enteritidis.